Consider the following 303-residue polypeptide: 5'-3' exonuclease (303 aa).

The 84-residue stretch at 179 to 262 (ISPAQWVDVK…LATITTEIEA (84 aa)) folds into the 5'-3' exonuclease domain.

Functionally, 5'-3' exonuclease acting preferentially on double-stranded DNA. The polypeptide is 5'-3' exonuclease (Halalkalibacterium halodurans (strain ATCC BAA-125 / DSM 18197 / FERM 7344 / JCM 9153 / C-125) (Bacillus halodurans)).